The sequence spans 344 residues: Ferredoxin--NADP reductase (344 aa).

FAD-binding residues include Asp36, Gln44, Tyr49, Val89, Phe127, Asp291, and Thr332.

It belongs to the ferredoxin--NADP reductase type 2 family. Homodimer. The cofactor is FAD.

The catalysed reaction is 2 reduced [2Fe-2S]-[ferredoxin] + NADP(+) + H(+) = 2 oxidized [2Fe-2S]-[ferredoxin] + NADPH. This is Ferredoxin--NADP reductase from Beijerinckia indica subsp. indica (strain ATCC 9039 / DSM 1715 / NCIMB 8712).